The sequence spans 233 residues: Chromosome partition protein MukE (233 aa).

Residues 207 to 233 (SLSLHDESDDADVTMGNAADSVEDEQE) are disordered.

The protein belongs to the MukE family. Interacts, and probably forms a ternary complex, with MukF and MukB. The complex formation is stimulated by calcium or magnesium.

The protein resides in the cytoplasm. The protein localises to the nucleoid. Involved in chromosome condensation, segregation and cell cycle progression. May participate in facilitating chromosome segregation by condensation DNA from both sides of a centrally located replisome during cell division. Probably acts via its interaction with MukB and MukF. In Yersinia pestis, this protein is Chromosome partition protein MukE.